The following is a 120-amino-acid chain: Large ribosomal subunit protein uL18 (120 aa).

Belongs to the universal ribosomal protein uL18 family. Part of the 50S ribosomal subunit; part of the 5S rRNA/L5/L18/L25 subcomplex. Contacts the 5S and 23S rRNAs.

In terms of biological role, this is one of the proteins that bind and probably mediate the attachment of the 5S RNA into the large ribosomal subunit, where it forms part of the central protuberance. This chain is Large ribosomal subunit protein uL18, found in Rhizobium johnstonii (strain DSM 114642 / LMG 32736 / 3841) (Rhizobium leguminosarum bv. viciae).